Reading from the N-terminus, the 116-residue chain is Large ribosomal subunit protein bL21c (116 aa).

Belongs to the bacterial ribosomal protein bL21 family. As to quaternary structure, part of the 50S ribosomal subunit.

The protein resides in the plastid. Its subcellular location is the chloroplast. Its function is as follows. This protein binds to 23S rRNA. This Emiliania huxleyi (Coccolithophore) protein is Large ribosomal subunit protein bL21c.